The following is a 255-amino-acid chain: Major prion protein (255 aa).

A signal peptide spans 1–24 (MVKSHIGSWILVLFVAMWSDVGLC). An interaction with ADGRG6 region spans residues 25–41 (KKRPKPGGGWNTGGSRY). The tract at residues 25–232 (KKRPKPGGGW…ESEAYYQRGA (208 aa)) is interaction with GRB2, ERI3 and SYN1. A disordered region spans residues 28–110 (PKPGGGWNTG…QWNKPSKPKT (83 aa)). Repeat copies occupy residues 54–62 (PQGGGGWGQ), 63–70 (PHGGGWGQ), 71–78 (PHGGGWGQ), 79–86 (PHGGGWGQ), and 87–94 (PHGGGGWG). Residues 54-94 (PQGGGGWGQPHGGGWGQPHGGGWGQPHGGGWGQPHGGGGWG) are 5 X 8 AA tandem repeats of P-H-G-G-G-W-G-Q. Gly residues predominate over residues 55-97 (QGGGGWGQPHGGGWGQPHGGGWGQPHGGGWGQPHGGGGWGQGG). 12 residues coordinate Cu(2+): histidine 64, glycine 65, glycine 66, histidine 72, glycine 73, glycine 74, histidine 80, glycine 81, glycine 82, histidine 88, glycine 90, and glycine 91. 3 N-linked (GlcNAc...) asparagine glycosylation sites follow: asparagine 174, asparagine 184, and asparagine 199. Cysteine 182 and cysteine 216 are joined by a disulfide. A lipid anchor (GPI-anchor amidated alanine) is attached at alanine 232. Positions 233–255 (SVILFSSPPVILLVSFLIFLIVG) are cleaved as a propeptide — removed in mature form.

Belongs to the prion family. As to quaternary structure, monomer and homodimer. Has a tendency to aggregate into amyloid fibrils containing a cross-beta spine, formed by a steric zipper of superposed beta-strands. Soluble oligomers may represent an intermediate stage on the path to fibril formation. Copper binding may promote oligomerization. Interacts with GRB2, APP, ERI3/PRNPIP and SYN1. Mislocalized cytosolically exposed PrP interacts with MGRN1; this interaction alters MGRN1 subcellular location and causes lysosomal enlargement. Interacts with APP. Interacts with KIAA1191. Interacts with ADGRG6.

It localises to the cell membrane. It is found in the golgi apparatus. Its function is as follows. Its primary physiological function is unclear. May play a role in neuronal development and synaptic plasticity. May be required for neuronal myelin sheath maintenance. May promote myelin homeostasis through acting as an agonist for ADGRG6 receptor. May play a role in iron uptake and iron homeostasis. Soluble oligomers are toxic to cultured neuroblastoma cells and induce apoptosis (in vitro). Association with GPC1 (via its heparan sulfate chains) targets PRNP to lipid rafts. Also provides Cu(2+) or Zn(2+) for the ascorbate-mediated GPC1 deaminase degradation of its heparan sulfate side chains. This Canis lupus familiaris (Dog) protein is Major prion protein (PRNP).